Reading from the N-terminus, the 315-residue chain is MQGLNHTSVSEFILVGFSAFPHLQLMLFLLFLLMYLFTLLGNLLIMATVWSERSLHMPMYLFLCALSITEILYTVAIIPRMLADLLSTQRSIAFLACASQMFFSFSFGFTHSFLLTVMGYDRYVAICHPLRYNVLMSLRGCTCRVGCSWAGGLVMGMVVTSAIFHLAFCGHKEIHHFFCHVPPLLKLACGDDVLVVAKGVGLVCITALLGCFLLILLSYAFIVAAILKIPSAEGRNKAFSTCASHLTVVVVHYGFASVIYLKPKGPQSPEGDTLMGITYTVLTPFLSPIIFSLRNKELKVAMKKTCFTKLFPQNC.

The Extracellular segment spans residues 1 to 25; it reads MQGLNHTSVSEFILVGFSAFPHLQL. A glycan (N-linked (GlcNAc...) asparagine) is linked at N5. A helical transmembrane segment spans residues 26 to 46; the sequence is MLFLLFLLMYLFTLLGNLLIM. At 47–54 the chain is on the cytoplasmic side; the sequence is ATVWSERS. A helical membrane pass occupies residues 55-75; the sequence is LHMPMYLFLCALSITEILYTV. Residues 76–99 lie on the Extracellular side of the membrane; sequence AIIPRMLADLLSTQRSIAFLACAS. Cysteines 97 and 189 form a disulfide. Residues 100–120 form a helical membrane-spanning segment; the sequence is QMFFSFSFGFTHSFLLTVMGY. Topologically, residues 121 to 139 are cytoplasmic; that stretch reads DRYVAICHPLRYNVLMSLR. The chain crosses the membrane as a helical span at residues 140 to 160; the sequence is GCTCRVGCSWAGGLVMGMVVT. Residues 161 to 197 lie on the Extracellular side of the membrane; it reads SAIFHLAFCGHKEIHHFFCHVPPLLKLACGDDVLVVA. The chain crosses the membrane as a helical span at residues 198-218; it reads KGVGLVCITALLGCFLLILLS. Over 219–238 the chain is Cytoplasmic; sequence YAFIVAAILKIPSAEGRNKA. Residues 239–259 form a helical membrane-spanning segment; sequence FSTCASHLTVVVVHYGFASVI. The Extracellular portion of the chain corresponds to 260 to 272; it reads YLKPKGPQSPEGD. The helical transmembrane segment at 273 to 293 threads the bilayer; sequence TLMGITYTVLTPFLSPIIFSL. Over 294–315 the chain is Cytoplasmic; it reads RNKELKVAMKKTCFTKLFPQNC.

It belongs to the G-protein coupled receptor 1 family.

The protein resides in the cell membrane. In terms of biological role, odorant receptor. In Homo sapiens (Human), this protein is Olfactory receptor 10H5 (OR10H5).